Reading from the N-terminus, the 96-residue chain is Co-chaperonin GroES (96 aa).

Belongs to the GroES chaperonin family. Heptamer of 7 subunits arranged in a ring. Interacts with the chaperonin GroEL.

The protein resides in the cytoplasm. Together with the chaperonin GroEL, plays an essential role in assisting protein folding. The GroEL-GroES system forms a nano-cage that allows encapsulation of the non-native substrate proteins and provides a physical environment optimized to promote and accelerate protein folding. GroES binds to the apical surface of the GroEL ring, thereby capping the opening of the GroEL channel. The sequence is that of Co-chaperonin GroES from Hyphomonas neptunium (strain ATCC 15444).